The sequence spans 102 residues: RNA-binding protein Hfq (102 aa).

The Sm domain maps to 9–68 (DPFLNALRRERVPVSIYLVNGIKLQGQIESFDQFVILLKNTVSQMVYKHAISTVVPSRPV). A disordered region spans residues 63 to 102 (VPSRPVSHHSNNAGGGSSNYHHGGSAQGSSAPQQDSDDAE). The span at 70–86 (HHSNNAGGGSSNYHHGG) shows a compositional bias: low complexity.

It belongs to the Hfq family. As to quaternary structure, homohexamer.

Functionally, RNA chaperone that binds small regulatory RNA (sRNAs) and mRNAs to facilitate mRNA translational regulation in response to envelope stress, environmental stress and changes in metabolite concentrations. Also binds with high specificity to tRNAs. The chain is RNA-binding protein Hfq from Klebsiella pneumoniae (strain 342).